A 597-amino-acid chain; its full sequence is Inactive metallocarboxypeptidase ECM14 (597 aa).

The signal sequence occupies residues 1–21 (MRLFTHGQVLALLAFVNTISA). The propeptide occupies 22–174 (TPSFSTNSYP…QTIYESYPSP (153 aa)). Residues 170–179 (SYPSPSQSPS) show a composition bias toward low complexity. Residues 170-189 (SYPSPSQSPSGRERGFLPSG) form a disordered region. A Peptidase M14 domain is found at 202-522 (NYQPLSVIVP…NAVMMLGRFL (321 aa)). Zn(2+) is bound by residues histidine 264 and glutamate 267. Substrate contacts are provided by residues 264 to 267 (HARE), arginine 322, and 339 to 340 (DR). Cysteine 333 and cysteine 356 are disulfide-bonded. Asparagine 349 is a glycosylation site (N-linked (GlcNAc...) asparagine). A Zn(2+)-binding site is contributed by histidine 396. A substrate-binding site is contributed by 397–398 (SY). A disordered region spans residues 543 to 597 (KDDKPILNDDDDDDADTNDDGIGRKDDSWIPDEYKGDNDRDESDGGWAFRRLRKR). The span at 550–561 (NDDDDDDADTND) shows a compositional bias: acidic residues. The span at 563–580 (GIGRKDDSWIPDEYKGDN) shows a compositional bias: basic and acidic residues.

It belongs to the peptidase M14 family. Zn(2+) serves as cofactor.

The protein localises to the vacuole. The protein resides in the secreted. Inactive carboxypeptidase that may play a role in cell wall organization and biogenesis. This is Inactive metallocarboxypeptidase ECM14 (ECM14) from Ajellomyces capsulatus (strain G186AR / H82 / ATCC MYA-2454 / RMSCC 2432) (Darling's disease fungus).